A 148-amino-acid polypeptide reads, in one-letter code: Deoxyuridine 5'-triphosphate nucleotidohydrolase (148 aa).

Residues 67–69 (RSG), asparagine 80, 84–86 (LID), and methionine 94 contribute to the substrate site.

It belongs to the dUTPase family. It depends on Mg(2+) as a cofactor.

The catalysed reaction is dUTP + H2O = dUMP + diphosphate + H(+). Its pathway is pyrimidine metabolism; dUMP biosynthesis; dUMP from dCTP (dUTP route): step 2/2. In terms of biological role, this enzyme is involved in nucleotide metabolism: it produces dUMP, the immediate precursor of thymidine nucleotides and it decreases the intracellular concentration of dUTP so that uracil cannot be incorporated into DNA. The sequence is that of Deoxyuridine 5'-triphosphate nucleotidohydrolase from Burkholderia ambifaria (strain ATCC BAA-244 / DSM 16087 / CCUG 44356 / LMG 19182 / AMMD) (Burkholderia cepacia (strain AMMD)).